The following is a 396-amino-acid chain: MTVSEGIARIQAFRKQVPLVEKNENITFFNLSFQPPMNSIVANTINEYVDWGLYNPNPKPLWQQKAEETRELVAKYLNASSSDSIAFTRDTTEGLNLFQRSMHFQPGDNVVLLDGEHPNHGFGWISLQEAGLEVRLIPSKDIYYADASTFEPYVDEKTKAIGISSVMFHSGQLNNVKDICNKFRPENIHVLVDMTQQVGLSSIDVQELNVSACAFACHKGLSCPTGLGVLYVAPDVLPQLKNVPPIVGAGAIENLDANLLVNLNPIYFSTARRFEHLNKSLITTLCLNNYLSFLMDIGFENIEQYLRELGKSLVDELSKLGVTIIGSKDPKKRSTHSYVAKILNPEWDAFLKNEGVYASQYRDGIRLSLGLYNNAADISRLANTIKKGVLNKIPFN.

K219 carries the N6-(pyridoxal phosphate)lysine modification.

Belongs to the class-V pyridoxal-phosphate-dependent aminotransferase family. The cofactor is pyridoxal 5'-phosphate.

The protein localises to the cytoplasm. It localises to the nucleus. This is an uncharacterized protein from Schizosaccharomyces pombe (strain 972 / ATCC 24843) (Fission yeast).